The following is a 474-amino-acid chain: L-arabinose isomerase (474 aa).

Mn(2+) contacts are provided by E306, E331, H348, and H447.

Belongs to the arabinose isomerase family. The cofactor is Mn(2+).

It catalyses the reaction beta-L-arabinopyranose = L-ribulose. It functions in the pathway carbohydrate degradation; L-arabinose degradation via L-ribulose; D-xylulose 5-phosphate from L-arabinose (bacterial route): step 1/3. Functionally, catalyzes the conversion of L-arabinose to L-ribulose. The polypeptide is L-arabinose isomerase (Lactiplantibacillus plantarum (strain ATCC BAA-793 / NCIMB 8826 / WCFS1) (Lactobacillus plantarum)).